A 370-amino-acid polypeptide reads, in one-letter code: Anhydro-N-acetylmuramic acid kinase (370 aa).

Position 13–20 (13–20) interacts with ATP; the sequence is GTSMDGVD.

It belongs to the anhydro-N-acetylmuramic acid kinase family.

The catalysed reaction is 1,6-anhydro-N-acetyl-beta-muramate + ATP + H2O = N-acetyl-D-muramate 6-phosphate + ADP + H(+). It participates in amino-sugar metabolism; 1,6-anhydro-N-acetylmuramate degradation. Its pathway is cell wall biogenesis; peptidoglycan recycling. Functionally, catalyzes the specific phosphorylation of 1,6-anhydro-N-acetylmuramic acid (anhMurNAc) with the simultaneous cleavage of the 1,6-anhydro ring, generating MurNAc-6-P. Is required for the utilization of anhMurNAc either imported from the medium or derived from its own cell wall murein, and thus plays a role in cell wall recycling. The protein is Anhydro-N-acetylmuramic acid kinase of Shewanella frigidimarina (strain NCIMB 400).